An 85-amino-acid chain; its full sequence is Large ribosomal subunit protein bL27 (85 aa).

Residues 1–22 (MAHKKGASSTRNGRDSNAQRLG) are disordered. The span at 7-19 (ASSTRNGRDSNAQ) shows a compositional bias: polar residues.

This sequence belongs to the bacterial ribosomal protein bL27 family.

The polypeptide is Large ribosomal subunit protein bL27 (rpmA) (Streptomyces griseus).